The following is a 266-amino-acid chain: Interleukin-1 beta (266 aa).

The propeptide occupies 1-113 (MATVPEPINE…ETSSDEFLCD (113 aa)).

The protein belongs to the IL-1 family. Monomer. In its precursor form, weakly interacts with full-length MEFV; the mature cytokine does not interact at all. Interacts with integrins ITGAV:ITGBV and ITGA5:ITGB1; integrin-binding is required for IL1B signaling. Interacts with cargo receptor TMED10; the interaction is direct and is required for the secretion of IL1B mature form. Interacts with HSP90AB1; the interaction facilitates cargo translocation into the ERGIC. Interacts with HSP90B1; the interaction facilitates cargo translocation into the ERGIC.

Its subcellular location is the cytoplasm. It localises to the cytosol. The protein resides in the secreted. The protein localises to the lysosome. It is found in the extracellular exosome. Functionally, potent pro-inflammatory cytokine. Initially discovered as the major endogenous pyrogen, induces prostaglandin synthesis, neutrophil influx and activation, T-cell activation and cytokine production, B-cell activation and antibody production, and fibroblast proliferation and collagen production. Promotes Th17 differentiation of T-cells. Synergizes with IL12/interleukin-12 to induce IFNG synthesis from T-helper 1 (Th1) cells. Plays a role in angiogenesis by inducing VEGF production synergistically with TNF and IL6. Involved in transduction of inflammation downstream of pyroptosis: its mature form is specifically released in the extracellular milieu by passing through the gasdermin-D (GSDMD) pore. This Bubalus carabanensis (Swamp type water buffalo) protein is Interleukin-1 beta (IL1B).